The chain runs to 464 residues: Spore coat protein SP65 (464 aa).

Residues Met-1 to Ala-17 form the signal peptide. A Follistatin-like 1 domain is found at Ala-21–Val-43. Asn-111 carries an N-linked (GlcNAc...) asparagine glycan. Follistatin-like domains are found at residues Val-121 to Val-143 and Leu-151 to Leu-173. Asn-247 carries an N-linked (GlcNAc...) asparagine glycan. The tract at residues Ser-250–Pro-320 is disordered.

In terms of assembly, binds to the C-terminal region of pspB.

The protein localises to the spore wall. Its function is as follows. Forms a triad with cellulose and pspB that is essential for spore outer layer formation. The chain is Spore coat protein SP65 (cotE) from Dictyostelium discoideum (Social amoeba).